Consider the following 349-residue polypeptide: Guanine nucleotide-binding protein-like alpha-10 subunit (349 aa).

The G-alpha domain maps to 33 to 349; it reads EEIRVLIYGQ…LNITYNSVKN (317 aa). Residues 36–49 are G1 motif; that stretch reads RVLIYGQKKVGVTT. The interval 168–176 is G2 motif; that stretch reads DLNFIKLTQ. A G3 motif region spans residues 191-200; the sequence is IKMIEMGIQT. GTP is bound by residues 195–199 and 266–269; these read EMGIQ and NKKD. The G4 motif stretch occupies residues 262–269; that stretch reads IVFFNKKD. The segment at 320–325 is G5 motif; that stretch reads NEESEV.

The protein belongs to the G-alpha family.

The chain is Guanine nucleotide-binding protein-like alpha-10 subunit (gpaJ) from Dictyostelium discoideum (Social amoeba).